We begin with the raw amino-acid sequence, 549 residues long: Oxygen-dependent choline dehydrogenase (549 aa).

Residue 4–33 participates in FAD binding; sequence DYVIVGSGSAGSAIAYRLSEDGRYSVIVIE. H465 functions as the Proton acceptor in the catalytic mechanism. The segment at 528–549 is disordered; that stretch reads KTPLPRSNQEPWVNPRAAVSDR.

The protein belongs to the GMC oxidoreductase family. It depends on FAD as a cofactor.

It catalyses the reaction choline + A = betaine aldehyde + AH2. The catalysed reaction is betaine aldehyde + NAD(+) + H2O = glycine betaine + NADH + 2 H(+). Its pathway is amine and polyamine biosynthesis; betaine biosynthesis via choline pathway; betaine aldehyde from choline (cytochrome c reductase route): step 1/1. Its function is as follows. Involved in the biosynthesis of the osmoprotectant glycine betaine. Catalyzes the oxidation of choline to betaine aldehyde and betaine aldehyde to glycine betaine at the same rate. The polypeptide is Oxygen-dependent choline dehydrogenase (Agrobacterium fabrum (strain C58 / ATCC 33970) (Agrobacterium tumefaciens (strain C58))).